Reading from the N-terminus, the 610-residue chain is Elongation factor 4 (610 aa).

Residues 14–196 form the tr-type G domain; sequence NRIRNFSIIA…ALVANIPPPK (183 aa). GTP-binding positions include 26 to 31 and 143 to 146; these read DHGKST and NKID.

Belongs to the TRAFAC class translation factor GTPase superfamily. Classic translation factor GTPase family. LepA subfamily.

It localises to the cell inner membrane. It catalyses the reaction GTP + H2O = GDP + phosphate + H(+). Its function is as follows. Required for accurate and efficient protein synthesis under certain stress conditions. May act as a fidelity factor of the translation reaction, by catalyzing a one-codon backward translocation of tRNAs on improperly translocated ribosomes. Back-translocation proceeds from a post-translocation (POST) complex to a pre-translocation (PRE) complex, thus giving elongation factor G a second chance to translocate the tRNAs correctly. Binds to ribosomes in a GTP-dependent manner. This is Elongation factor 4 from Legionella pneumophila (strain Lens).